The chain runs to 439 residues: Xaa-Pro dipeptidase (439 aa).

Mn(2+) is bound by residues aspartate 244, aspartate 255, histidine 335, glutamate 380, and glutamate 419.

This sequence belongs to the peptidase M24B family. Bacterial-type prolidase subfamily. Mn(2+) is required as a cofactor.

The enzyme catalyses Xaa-L-Pro dipeptide + H2O = an L-alpha-amino acid + L-proline. In terms of biological role, splits dipeptides with a prolyl residue in the C-terminal position. The protein is Xaa-Pro dipeptidase of Shewanella sediminis (strain HAW-EB3).